We begin with the raw amino-acid sequence, 362 residues long: MNQVYNFSSGPAMLPVEVLRRAEQELCNWHGIGTSIMEISHRGKEFIAVAKEAENDLRDLLSVPENYKVLFCHGGARGQFAAIPMNLLGDKVKADYIDGGYWAACAVKEAKKYCTPNVINIKTEINGLKSVKPMREWSLSDDAAYVHYCPNETIDGIAIHEQPDFSDNKIIIADYSSSILSGPLDVSRYGMIYAGAQKNIGPAGITLVIVREDLLGKARKETPSIFDYAVLAENDSMFNTPPTFAWYLSGLVFKWLKEQGGVQEMAKRNRAKAELLYDVIDKSDFYRNQVAPENRSLMNVPFQMVDASLDSKFLAEADAQGLQALKGHRVSGGMRASIYNAMSIEGVQALVDFMADFERRNG.

2 residues coordinate L-glutamate: Ser-9 and Arg-42. Pyridoxal 5'-phosphate-binding positions include Ala-76–Arg-77, Trp-102, Thr-153, Asp-174, and Gln-197. Lys-198 is modified (N6-(pyridoxal phosphate)lysine). Asn-239–Thr-240 contributes to the pyridoxal 5'-phosphate binding site.

Belongs to the class-V pyridoxal-phosphate-dependent aminotransferase family. SerC subfamily. In terms of assembly, homodimer. Pyridoxal 5'-phosphate is required as a cofactor.

The protein resides in the cytoplasm. It carries out the reaction O-phospho-L-serine + 2-oxoglutarate = 3-phosphooxypyruvate + L-glutamate. The enzyme catalyses 4-(phosphooxy)-L-threonine + 2-oxoglutarate = (R)-3-hydroxy-2-oxo-4-phosphooxybutanoate + L-glutamate. The protein operates within amino-acid biosynthesis; L-serine biosynthesis; L-serine from 3-phospho-D-glycerate: step 2/3. Its pathway is cofactor biosynthesis; pyridoxine 5'-phosphate biosynthesis; pyridoxine 5'-phosphate from D-erythrose 4-phosphate: step 3/5. Catalyzes the reversible conversion of 3-phosphohydroxypyruvate to phosphoserine and of 3-hydroxy-2-oxo-4-phosphonooxybutanoate to phosphohydroxythreonine. The polypeptide is Phosphoserine aminotransferase (Photorhabdus laumondii subsp. laumondii (strain DSM 15139 / CIP 105565 / TT01) (Photorhabdus luminescens subsp. laumondii)).